The chain runs to 385 residues: Torsin-3A (385 aa).

The first 21 residues, 1 to 21 (MFLGALWLLLLLPLRPPGAQG), serve as a signal peptide directing secretion. N-linked (GlcNAc...) asparagine glycosylation is present at Asn-110. Position 155–162 (155–162 (GWSGTGKN)) interacts with ATP.

Belongs to the ClpA/ClpB family. Torsin subfamily. Interacts with TOR1AIP1. In terms of processing, N-glycosylated.

Its subcellular location is the cytoplasm. It localises to the endoplasmic reticulum lumen. The chain is Torsin-3A (Tor3a) from Mus musculus (Mouse).